A 492-amino-acid chain; its full sequence is 3-octaprenyl-4-hydroxybenzoate carboxy-lyase (492 aa).

Asparagine 177 serves as a coordination point for Mn(2+). Residues 180-182, 194-196, and 199-200 contribute to the prenylated FMN site; these read IYR, RWL, and RG. Glutamate 243 provides a ligand contact to Mn(2+). Catalysis depends on aspartate 292, which acts as the Proton donor.

This sequence belongs to the UbiD family. In terms of assembly, homohexamer. It depends on prenylated FMN as a cofactor. Mn(2+) is required as a cofactor.

The protein localises to the cell membrane. It catalyses the reaction a 4-hydroxy-3-(all-trans-polyprenyl)benzoate + H(+) = a 2-(all-trans-polyprenyl)phenol + CO2. It functions in the pathway cofactor biosynthesis; ubiquinone biosynthesis. Functionally, catalyzes the decarboxylation of 3-octaprenyl-4-hydroxy benzoate to 2-octaprenylphenol, an intermediate step in ubiquinone biosynthesis. The protein is 3-octaprenyl-4-hydroxybenzoate carboxy-lyase of Neisseria gonorrhoeae (strain ATCC 700825 / FA 1090).